The primary structure comprises 38 residues: Large ribosomal subunit protein bL36 (38 aa).

Belongs to the bacterial ribosomal protein bL36 family.

The protein is Large ribosomal subunit protein bL36 of Wigglesworthia glossinidia brevipalpis.